The primary structure comprises 298 residues: Putative insertion sequence ATP-binding protein y4iQ/y4nD/y4sD (298 aa).

Residue 114–121 (GPPGGGKS) participates in ATP binding. The disordered stretch occupies residues 276-298 (RQSEHDETLASDNQHDTFMPTAT).

The protein belongs to the IS21/IS1162 putative ATP-binding protein family.

The polypeptide is Putative insertion sequence ATP-binding protein y4iQ/y4nD/y4sD (Sinorhizobium fredii (strain NBRC 101917 / NGR234)).